The following is a 110-amino-acid chain: UPF0122 protein SGO_1122 (110 aa).

This sequence belongs to the UPF0122 family.

In terms of biological role, might take part in the signal recognition particle (SRP) pathway. This is inferred from the conservation of its genetic proximity to ftsY/ffh. May be a regulatory protein. The protein is UPF0122 protein SGO_1122 of Streptococcus gordonii (strain Challis / ATCC 35105 / BCRC 15272 / CH1 / DL1 / V288).